The chain runs to 318 residues: MNPIAVTLLTGFLGAGKTTLLRHILNEQHGYKIAVIENEFGEVSVDDQLIGDRATQIKTLTNGCICCSRSNELEDALLDLLDNLDKGNIQFDRLVIECTGMADPGPIIQTFFSHEVLCQRYLLDGVIALVDAVHADEQMNQFTIAQSQVGYADRILLTKTDVAGEAEKLHERLARINARAPVYTVTHGDIDLGLLFNTNGFMLEENVVSTKPRFHFIADKQNDISSIVVELDYPVDISEVSRVMENLLLESADKLLRYKGMLWIDGEPNRLLFQGVQRLYSADWDRPWGDEKPHSTMVFIGIQLPEEEIRAAFAGLRK.

GTP is bound at residue Gly-11–Thr-19. 5 residues coordinate Zn(2+): Glu-37, Glu-42, Cys-66, Glu-74, and His-114. The CXCC motif signature appears at Cys-64–Cys-67. Residue Asp-161 coordinates GTP. Zn(2+) contacts are provided by Glu-167, His-170, and His-187. Residues Ile-224–Gly-315 form the CobW C-terminal domain.

The protein belongs to the SIMIBI class G3E GTPase family. ZNG1 subfamily. As to quaternary structure, monomer in the apo form. Metal binding induces oligomerization. Forms homodimers and higher oligomers.

It catalyses the reaction GTP + H2O = GDP + phosphate + H(+). Its activity is regulated as follows. GTPase activity is inhibited by metal binding. Activity is decreased in the presence of Co(II) or Ni(II), and is completely inhibited in the presence of Zn(II). In terms of biological role, zinc chaperone that directly transfers zinc cofactor to target proteins, thereby activating them. Zinc is transferred from the CXCC motif in the GTPase domain to the zinc binding site in target proteins in a process requiring GTP hydrolysis. This is Zinc chaperone YjiA (yjiA) from Escherichia coli (strain K12).